The following is a 703-amino-acid chain: Subtilisin-like protease SBT4.7 (703 aa).

The first 19 residues, 1–19 (MAKRDYFCFVVLFLSSVSA), serve as a signal peptide directing secretion. A propeptide spans 20–107 (VIDDPQNKQV…VFPNINYKLQ (88 aa)) (activation peptide). The Inhibitor I9 domain maps to 29 to 106 (VYVVYMGSLP…SVFPNINYKL (78 aa)). In terms of domain architecture, Peptidase S8 spans 111 to 556 (SWDFLGLKEG…AGHVDQIAAI (446 aa)). The active-site Charge relay system is the D139. The N-linked (GlcNAc...) asparagine glycan is linked to N170. The active-site Charge relay system is the H194. N-linked (GlcNAc...) asparagine glycans are attached at residues N217, N360, N416, and N433. Residues 350 to 411 (KYPLVYGDNF…LLPPDDFDSL (62 aa)) form the PA domain. S495 (charge relay system) is an active-site residue. N-linked (GlcNAc...) asparagine glycosylation is found at N577, N615, and N633.

Belongs to the peptidase S8 family. In terms of processing, the C-terminal propeptide is autocleaved.

It is found in the secreted. The protein is Subtilisin-like protease SBT4.7 of Arabidopsis thaliana (Mouse-ear cress).